A 28-amino-acid chain; its full sequence is Phospholipase A2 (28 aa).

Gly-28 contacts Ca(2+).

It depends on Ca(2+) as a cofactor. As to expression, expressed by the venom gland.

The protein localises to the secreted. The catalysed reaction is a 1,2-diacyl-sn-glycero-3-phosphocholine + H2O = a 1-acyl-sn-glycero-3-phosphocholine + a fatty acid + H(+). Its function is as follows. PLA2 catalyzes the calcium-dependent hydrolysis of the 2-acyl groups in 3-sn-phosphoglycerides. The chain is Phospholipase A2 from Scolopendra dehaani (Thai centipede).